Consider the following 80-residue polypeptide: Exodeoxyribonuclease 7 small subunit (80 aa).

The protein belongs to the XseB family. As to quaternary structure, heterooligomer composed of large and small subunits.

The protein localises to the cytoplasm. The catalysed reaction is Exonucleolytic cleavage in either 5'- to 3'- or 3'- to 5'-direction to yield nucleoside 5'-phosphates.. Its function is as follows. Bidirectionally degrades single-stranded DNA into large acid-insoluble oligonucleotides, which are then degraded further into small acid-soluble oligonucleotides. This is Exodeoxyribonuclease 7 small subunit from Escherichia coli O139:H28 (strain E24377A / ETEC).